We begin with the raw amino-acid sequence, 175 residues long: MGSKMSDPLVIGRVIGEVVDYFTPSVKMSVTYNSSKHVYNGHELFPSSVTSKPRVEVHGGDLRSFFTLIMIDPDVPGPSDPYLREHLHWIVTDIPGTTDCSFGREIVGYEMPRPNIGIHRFVFLLFKQKKRQTLLSAPLSRDRFNTRKFSEENELGSPVAAAFFNCQRETAARRR.

Belongs to the phosphatidylethanolamine-binding protein family. As to expression, expressed in vegetative axillary meristems but not in the main shoot meristem.

It is found in the cytoplasm. In terms of biological role, may form complexes with phosphorylated ligands by interfering with kinases and their effectors. This chain is CEN-like protein 4 (CET4), found in Nicotiana tabacum (Common tobacco).